Here is a 149-residue protein sequence, read N- to C-terminus: UPF0178 protein VC0395_A0405/VC395_0897 (149 aa).

It belongs to the UPF0178 family.

The chain is UPF0178 protein VC0395_A0405/VC395_0897 from Vibrio cholerae serotype O1 (strain ATCC 39541 / Classical Ogawa 395 / O395).